The following is a 320-amino-acid chain: Na(+)-translocating NADH-quinone reductase subunit C (320 aa).

The helical transmembrane segment at 16–36 (WYIVSFILGLSLFAGVLLSTI) threads the bilayer. Thr285 carries the post-translational modification FMN phosphoryl threonine.

It belongs to the NqrC family. In terms of assembly, composed of six subunits; NqrA, NqrB, NqrC, NqrD, NqrE and NqrF. Requires FMN as cofactor.

The protein resides in the cell inner membrane. It carries out the reaction a ubiquinone + n Na(+)(in) + NADH + H(+) = a ubiquinol + n Na(+)(out) + NAD(+). Its function is as follows. NQR complex catalyzes the reduction of ubiquinone-1 to ubiquinol by two successive reactions, coupled with the transport of Na(+) ions from the cytoplasm to the periplasm. NqrA to NqrE are probably involved in the second step, the conversion of ubisemiquinone to ubiquinol. This is Na(+)-translocating NADH-quinone reductase subunit C from Chlamydia pneumoniae (Chlamydophila pneumoniae).